The following is a 259-amino-acid chain: tRNA pseudouridine synthase A (259 aa).

Residue aspartate 52 is the Nucleophile of the active site. Tyrosine 110 contacts substrate.

Belongs to the tRNA pseudouridine synthase TruA family. In terms of assembly, homodimer.

The enzyme catalyses uridine(38/39/40) in tRNA = pseudouridine(38/39/40) in tRNA. Functionally, formation of pseudouridine at positions 38, 39 and 40 in the anticodon stem and loop of transfer RNAs. The sequence is that of tRNA pseudouridine synthase A from Coprothermobacter proteolyticus (strain ATCC 35245 / DSM 5265 / OCM 4 / BT).